Reading from the N-terminus, the 296-residue chain is MSSNPFRIQNPQPQPQRQPRDLRKVNQQVQAVDLKVQMKMKNIKYKIGVVSGKGGVGKSFVSSNLAMAIAASGRKVGIVDVDFHGPSVPKMLGVRGQMLTADDKGINPVIGPFGIKVVSIDFLLPRDDTPVVWRGAIKHSAIKQFLGDVNWGELDYLIIDMPPGTGDEALSIAQLVPGITGFVIVTIPSEVSTLAVKKSINFARTVNTKILGVVENMSHFVCPSDGKVYYIFGEGKGKKMAEEMGVDLLGQVPLDPSIAEANDAGEPFFLKHPDSPTSKEFLNIADKVIKIVESNQ.

The segment covering Met-1–Arg-17 has biased composition (low complexity). The disordered stretch occupies residues Met-1–Arg-23. Position 52-59 (Gly-52–Ser-59) interacts with ATP.

Belongs to the Mrp/NBP35 ATP-binding proteins family. Homodimer.

Functionally, binds and transfers iron-sulfur (Fe-S) clusters to target apoproteins. Can hydrolyze ATP. The chain is Iron-sulfur cluster carrier protein from Saccharolobus solfataricus (strain ATCC 35092 / DSM 1617 / JCM 11322 / P2) (Sulfolobus solfataricus).